The chain runs to 375 residues: Outer membrane porin OmpD (375 aa).

The N-terminal stretch at 1–34 (MRKHAKKIIRIIKMKLKLVAVAVTSLLAAGVVNA) is a signal peptide.

This sequence belongs to the Gram-negative porin family. As to quaternary structure, homotrimer. Mixed heterotrimers with other porins are also probable.

It localises to the cell outer membrane. In terms of biological role, forms pores that allow passive diffusion of small molecules across the outer membrane. The sequence is that of Outer membrane porin OmpD from Salmonella typhimurium (strain SL1344).